The sequence spans 530 residues: Ubiquitin carboxyl-terminal hydrolase 17-like protein 19 (530 aa).

In terms of domain architecture, USP spans 80–375 (AGLQNMGNTC…QAYVLFYIQK (296 aa)). Cysteine 89 serves as the catalytic Nucleophile. The active-site Proton acceptor is histidine 334. Basic and acidic residues-rich tracts occupy residues 382 to 392 (SESVSRGREPR) and 398 to 413 (DTDR…RDHP). 2 disordered regions span residues 382 to 413 (SESV…RDHP) and 476 to 530 (KNHH…LVCQ). Residues 484 to 495 (SSLLKLSSTTPT) are compositionally biased toward low complexity. Residues 496–505 (HQESMNTGTL) are compositionally biased toward polar residues. A compositionally biased stretch (basic residues) spans 510-524 (GRARRSKGKNKHSKR).

It belongs to the peptidase C19 family. USP17 subfamily.

It localises to the nucleus. The protein localises to the endoplasmic reticulum. It carries out the reaction Thiol-dependent hydrolysis of ester, thioester, amide, peptide and isopeptide bonds formed by the C-terminal Gly of ubiquitin (a 76-residue protein attached to proteins as an intracellular targeting signal).. Its function is as follows. Deubiquitinating enzyme that removes conjugated ubiquitin from specific proteins to regulate different cellular processes that may include cell proliferation, progression through the cell cycle, apoptosis, cell migration, and the cellular response to viral infection. This Homo sapiens (Human) protein is Ubiquitin carboxyl-terminal hydrolase 17-like protein 19 (USP17L19).